Here is a 418-residue protein sequence, read N- to C-terminus: UDP-N-acetylglucosamine 1-carboxyvinyltransferase (418 aa).

22–23 (KN) is a phosphoenolpyruvate binding site. R92 is a binding site for UDP-N-acetyl-alpha-D-glucosamine. C116 acts as the Proton donor in catalysis. A 2-(S-cysteinyl)pyruvic acid O-phosphothioketal modification is found at C116. Residues 121–125 (RPVDQ), D306, and I328 each bind UDP-N-acetyl-alpha-D-glucosamine.

The protein belongs to the EPSP synthase family. MurA subfamily.

The protein resides in the cytoplasm. The catalysed reaction is phosphoenolpyruvate + UDP-N-acetyl-alpha-D-glucosamine = UDP-N-acetyl-3-O-(1-carboxyvinyl)-alpha-D-glucosamine + phosphate. It participates in cell wall biogenesis; peptidoglycan biosynthesis. Functionally, cell wall formation. Adds enolpyruvyl to UDP-N-acetylglucosamine. The polypeptide is UDP-N-acetylglucosamine 1-carboxyvinyltransferase (Acinetobacter baylyi (strain ATCC 33305 / BD413 / ADP1)).